The sequence spans 436 residues: [Pyruvate dehydrogenase (acetyl-transferring)] kinase isozyme 1, mitochondrial (436 aa).

Residues 1–28 (MRLARLLRGAALAGPGPGLRAAGFSRSF) constitute a mitochondrion transit peptide. Tyr136 bears the Phosphotyrosine; by FGFR1 mark. In terms of domain architecture, Histidine kinase spans 163 to 393 (YKESFGVDPV…DAVIYIKALS (231 aa)). Tyr243 bears the Phosphotyrosine; by FGFR1, ABL1, FLT3 and JAK2 mark. Position 244 is a phosphotyrosine; by FGFR1 (Tyr244). ATP contacts are provided by residues 279-286 (ELFKNAMR), Asp318, 337-338 (ST), and 354-359 (GFGYGL). Thr338 is subject to Phosphothreonine. N6-succinyllysine is present on Lys405.

This sequence belongs to the PDK/BCKDK protein kinase family. As to quaternary structure, homodimer, and heterodimer with PDK2. Interacts with the pyruvate dehydrogenase complex subunit DLAT, and is part of the multimeric pyruvate dehydrogenase complex that contains multiple copies of pyruvate dehydrogenase (E1), dihydrolipoamide acetyltransferase (DLAT, E2) and lipoamide dehydrogenase (DLD, E3). Interacts with phosphoglycerate kinase PGK1; the interaction is direct, occurs under hypoxic conditions and leads to PDK1-mediated inhibition of pyruvate dehydrogenase complex activity. In terms of processing, phosphorylated by constitutively activated ABL1, FGFR1, FLT3 and JAK2 (in vitro), and this may also occur in cancer cells that express constitutively activated ABL1, FGFR1, FLT3 and JAK2. Phosphorylation at Tyr-243 and Tyr-244 strongly increases kinase activity, while phosphorylation at Tyr-136 has a lesser effect. Phosphorylated under hypoxic conditions at Thr-338 by phosphoglycerate kinase PGK1 which has an activating effect. In terms of tissue distribution, expressed predominantly in the heart. Detected at lower levels in liver, skeletal muscle and pancreas.

Its subcellular location is the mitochondrion matrix. It catalyses the reaction L-seryl-[pyruvate dehydrogenase E1 alpha subunit] + ATP = O-phospho-L-seryl-[pyruvate dehydrogenase E1 alpha subunit] + ADP + H(+). Its activity is regulated as follows. Activity is enhanced by binding to the pyruvate dehydrogenase subunit DLAT. Inhibited by AZD7545; this compound interferes with DLAT binding and thereby inhibits kinase activity. Inhibited by dichloroacetate and radicicol. Activated under hypoxic conditions by phosphoglycerate kinase PGK1-mediated phosphorylation at Thr-338. Its function is as follows. Kinase that plays a key role in regulation of glucose and fatty acid metabolism and homeostasis via phosphorylation of the pyruvate dehydrogenase subunits PDHA1 and PDHA2. This inhibits pyruvate dehydrogenase activity, and thereby regulates metabolite flux through the tricarboxylic acid cycle, down-regulates aerobic respiration and inhibits the formation of acetyl-coenzyme A from pyruvate. Plays an important role in cellular responses to hypoxia and is important for cell proliferation under hypoxia. The polypeptide is [Pyruvate dehydrogenase (acetyl-transferring)] kinase isozyme 1, mitochondrial (PDK1) (Homo sapiens (Human)).